The chain runs to 374 residues: C-X-C chemokine receptor type 5 (374 aa).

Topologically, residues 1-57 (MNSPISLDMGAITYNMDDLYKELAIYSNSTEIPLQDSIFCSTEEGPLLTSFKTIFMP) are extracellular. A glycan (N-linked (GlcNAc...) asparagine) is linked at Asn-28. Residues 58–78 (VAYSLIFLLGMMGNILVLVIL) traverse the membrane as a helical segment. Residues 79–90 (ERHRHTRSSTET) are Cytoplasmic-facing. Residues 91-111 (FLFHLAVADLLLVFILPFAVA) traverse the membrane as a helical segment. The Extracellular portion of the chain corresponds to 112 to 126 (EGSVGWVLGTFLCKT). An intrachain disulfide couples Cys-124 to Cys-204. A helical transmembrane segment spans residues 127-147 (VIALHKINFYCSSLLLACIAV). Residues 148-169 (DRYLAIVHAVHAYRRRRLLSIH) lie on the Cytoplasmic side of the membrane. The chain crosses the membrane as a helical span at residues 170–190 (ITCSTIWLAGFLFALPELLFA). Over 191–221 (KVVQPHNNESLPQCIFSQENEAETRAWFASR) the chain is Extracellular. Asn-198 carries an N-linked (GlcNAc...) asparagine glycan. The helical transmembrane segment at 222–242 (FLYHTGGFLLPMLVMAWCYVG) threads the bilayer. Residues 243–261 (VVHRLLQAQRRPQRQKAVR) are Cytoplasmic-facing. Residues 262-282 (VAILVTSIFLLCWSPYHIVIF) traverse the membrane as a helical segment. Residues 283-306 (LDTLERLKAVNSSCELSGYLSVAI) are Extracellular-facing. The helical transmembrane segment at 307-327 (TLCEFLGLAHCCLNPMLYTFA) threads the bilayer. The Cytoplasmic segment spans residues 328 to 374 (GVKFRSDLSRLLTKLGCAGPASLCQLFPGWRKSSLSESENATSLTTF).

It belongs to the G-protein coupled receptor 1 family. In terms of tissue distribution, expressed in neuronal and lymphatic tissue.

It localises to the cell membrane. In terms of biological role, cytokine receptor that binds to B-lymphocyte chemoattractant (BLC). Involved in B-cell migration into B-cell follicles of spleen and Peyer patches but not into those of mesenteric or peripheral lymph nodes. This Rattus norvegicus (Rat) protein is C-X-C chemokine receptor type 5 (Cxcr5).